The chain runs to 202 residues: ATP-dependent Clp protease proteolytic subunit (202 aa).

S101 (nucleophile) is an active-site residue. Residue H126 is part of the active site.

The protein belongs to the peptidase S14 family. Component of the chloroplastic Clp protease core complex.

The protein localises to the plastid. The protein resides in the chloroplast stroma. It carries out the reaction Hydrolysis of proteins to small peptides in the presence of ATP and magnesium. alpha-casein is the usual test substrate. In the absence of ATP, only oligopeptides shorter than five residues are hydrolyzed (such as succinyl-Leu-Tyr-|-NHMec, and Leu-Tyr-Leu-|-Tyr-Trp, in which cleavage of the -Tyr-|-Leu- and -Tyr-|-Trp bonds also occurs).. Its function is as follows. Cleaves peptides in various proteins in a process that requires ATP hydrolysis. Has a chymotrypsin-like activity. Plays a major role in the degradation of misfolded proteins. The chain is ATP-dependent Clp protease proteolytic subunit from Calycanthus floridus var. glaucus (Eastern sweetshrub).